A 532-amino-acid chain; its full sequence is Probable 1,4-beta-D-glucan cellobiohydrolase B (532 aa).

The first 26 residues, 1-26, serve as a signal peptide directing secretion; the sequence is MLASTFSYRMYKTALILAALLGSGQA. Residues 27–461 are catalytic; it reads QQVGTSQAEV…SNIKVGPIGS (435 aa). Residue Glu-238 is the Nucleophile of the active site. Glu-243 serves as the catalytic Proton donor. N-linked (GlcNAc...) asparagine glycosylation is present at Asn-296. Positions 462 to 495 are disordered; the sequence is TFNSGGSNPGGGTTTTTTTQPTTTTTTAGNPGGT. The thr-rich linker stretch occupies residues 462–496; sequence TFNSGGSNPGGGTTTTTTTQPTTTTTTAGNPGGTG. The span at 475 to 490 shows a compositional bias: low complexity; the sequence is TTTTTTQPTTTTTTAG. The CBM1 domain maps to 496–532; it reads GVAQHYGQCGGIGWTGPTTCASPYTCQKLNDYYSQCL. Intrachain disulfides connect Cys-504–Cys-521 and Cys-515–Cys-531.

This sequence belongs to the glycosyl hydrolase 7 (cellulase C) family.

The protein localises to the secreted. It catalyses the reaction Hydrolysis of (1-&gt;4)-beta-D-glucosidic linkages in cellulose and cellotetraose, releasing cellobiose from the non-reducing ends of the chains.. In terms of biological role, the biological conversion of cellulose to glucose generally requires three types of hydrolytic enzymes: (1) Endoglucanases which cut internal beta-1,4-glucosidic bonds; (2) Exocellobiohydrolases that cut the disaccharide cellobiose from the non-reducing end of the cellulose polymer chain; (3) Beta-1,4-glucosidases which hydrolyze the cellobiose and other short cello-oligosaccharides to glucose. In Aspergillus fumigatus (strain CBS 144.89 / FGSC A1163 / CEA10) (Neosartorya fumigata), this protein is Probable 1,4-beta-D-glucan cellobiohydrolase B (cbhB).